The chain runs to 346 residues: tRNA N6-adenosine threonylcarbamoyltransferase (346 aa).

Fe cation contacts are provided by His-111 and His-115. Substrate-binding positions include Leu-134 to Gly-138, Asp-167, Gly-180, and Asn-279. Fe cation is bound at residue Asp-307.

The protein belongs to the KAE1 / TsaD family. Fe(2+) is required as a cofactor.

It localises to the cytoplasm. The enzyme catalyses L-threonylcarbamoyladenylate + adenosine(37) in tRNA = N(6)-L-threonylcarbamoyladenosine(37) in tRNA + AMP + H(+). Functionally, required for the formation of a threonylcarbamoyl group on adenosine at position 37 (t(6)A37) in tRNAs that read codons beginning with adenine. Is involved in the transfer of the threonylcarbamoyl moiety of threonylcarbamoyl-AMP (TC-AMP) to the N6 group of A37, together with TsaE and TsaB. TsaD likely plays a direct catalytic role in this reaction. The sequence is that of tRNA N6-adenosine threonylcarbamoyltransferase from Burkholderia cenocepacia (strain HI2424).